The chain runs to 111 residues: uncharacterized protein (111 aa).

Residues 60 to 80 (TFGRFLAHISCLICILSKRIF) traverse the membrane as a helical segment.

It is found in the mitochondrion membrane. This is an uncharacterized protein from Arabidopsis thaliana (Mouse-ear cress).